Here is a 300-residue protein sequence, read N- to C-terminus: Zinc finger CCCH-type antiviral protein 1-like (300 aa).

Position 2 is an N-acetylalanine (A2). Polar residues predominate over residues 252-263 (NTDNSSPSTEHS). Residues 252–300 (NTDNSSPSTEHSQGLEKQGVHAAGAAEAGPLASVPAQSAKKPCPVSCEK) form a disordered region. A compositionally biased stretch (low complexity) spans 271–283 (VHAAGAAEAGPLA).

The polypeptide is Zinc finger CCCH-type antiviral protein 1-like (ZC3HAV1L) (Homo sapiens (Human)).